Consider the following 1024-residue polypeptide: Multidrug resistance protein MdtC (1024 aa).

The next 12 helical transmembrane spans lie at 12–32 (VATTLLTLAITLSGIIGFSLL), 333–353 (EVERSLVIAVALVILVVFIFL), 360–380 (LIPAVAVPVSLIGTFAAMYLC), 387–407 (LSLMALTIATGFVVDDAIVVL), 435–455 (VLSMSISLVAVFIPLLLMAGL), 469–489 (VAIGISLVISLTLTPMMCAWL), 528–548 (WVMVVLLSTIALNVWLYISIP), 853–873 (LWLIMAAIATVYIVLGILYES), 875–895 (VHPLTILSTLPSAGVGALLAL), 897–917 (LFDAPFSLIALIGIMLLIGIV), 953–973 (PIIMTTLAALFGALPLVLSSG), and 984–1004 (ITIVGGLVVSQLLTLYTTPVI).

This sequence belongs to the resistance-nodulation-cell division (RND) (TC 2.A.6) family. MdtC subfamily. Part of a tripartite efflux system composed of MdtA, MdtB and MdtC. MdtC forms a heteromultimer with MdtB.

The protein resides in the cell inner membrane. This is Multidrug resistance protein MdtC from Yersinia pseudotuberculosis serotype IB (strain PB1/+).